The following is a 105-amino-acid chain: N(4)-acetylcytidine amidohydrolase (105 aa).

In terms of domain architecture, ASCH spans threonine 7–glutamate 93. The active-site Proton acceptor is the lysine 21. Catalysis depends on threonine 24, which acts as the Nucleophile. Glutamate 74 acts as the Proton donor in catalysis.

This sequence belongs to the N(4)-acetylcytidine amidohydrolase family.

It catalyses the reaction N(4)-acetylcytidine + H2O = cytidine + acetate + H(+). The enzyme catalyses N(4)-acetyl-2'-deoxycytidine + H2O = 2'-deoxycytidine + acetate + H(+). The catalysed reaction is N(4)-acetylcytosine + H2O = cytosine + acetate + H(+). Its function is as follows. Catalyzes the hydrolysis of N(4)-acetylcytidine (ac4C). This Shewanella baltica (strain OS185) protein is N(4)-acetylcytidine amidohydrolase.